The chain runs to 293 residues: Protein boule-like (293 aa).

Residues 1–16 (METESRAQSTNQTQTD) show a composition bias toward polar residues. A disordered region spans residues 1-39 (METESRAQSTNQTQTDSLSPSPNPVSPVPLNNPTSGPRY). Ser-19, Ser-21, and Ser-26 each carry phosphoserine. Positions 45–122 (NRIFVGGIDF…KKLNIGPAIR (78 aa)) constitute an RRM domain. The 25-residue stretch at 172-196 (PSRSISSSPVMVAQPVYQQPAYHYQ) folds into the DAZ domain.

This sequence belongs to the RRM DAZ family. As to quaternary structure, interacts with DAZ1 and DAZL. In terms of tissue distribution, testis specific. Not expressed in early embryos, primoridal germ cells and spermatogonial cells. First expressed in the cytoplasm of spermatocytes and then persists through meiosis.

The protein localises to the cytoplasm. In terms of biological role, probable RNA-binding protein, which may be required during spermatogenesis. May act by binding to the 3'-UTR of mRNAs and regulating their translation. The protein is Protein boule-like of Mus musculus (Mouse).